Here is a 261-residue protein sequence, read N- to C-terminus: Triosephosphate isomerase (261 aa).

D-glyceraldehyde 3-phosphate is bound by residues asparagine 11 and lysine 13. Histidine 102 (electrophile) is an active-site residue. The active-site Proton acceptor is glutamate 174. D-glyceraldehyde 3-phosphate is bound by residues glycine 180, leucine 239, and glycine 241.

Belongs to the triosephosphate isomerase family. In terms of assembly, homodimer.

The catalysed reaction is D-glyceraldehyde 3-phosphate = dihydroxyacetone phosphate. It functions in the pathway carbohydrate biosynthesis; gluconeogenesis. Its pathway is carbohydrate degradation; glycolysis; D-glyceraldehyde 3-phosphate from glycerone phosphate: step 1/1. Its function is as follows. Catalyzes the interconversion of glyceraldehyde 3-phosphate and dihydroxyacetone phosphate in the glycolytic and gluconeogenic pathways. The chain is Triosephosphate isomerase from Entamoeba histolytica (strain ATCC 30459 / HM-1:IMSS / ABRM).